Consider the following 187-residue polypeptide: Elongation factor P (187 aa).

This sequence belongs to the elongation factor P family.

Its subcellular location is the cytoplasm. It participates in protein biosynthesis; polypeptide chain elongation. Its function is as follows. Involved in peptide bond synthesis. Stimulates efficient translation and peptide-bond synthesis on native or reconstituted 70S ribosomes in vitro. Probably functions indirectly by altering the affinity of the ribosome for aminoacyl-tRNA, thus increasing their reactivity as acceptors for peptidyl transferase. The polypeptide is Elongation factor P (Erythrobacter litoralis (strain HTCC2594)).